Consider the following 510-residue polypeptide: Glutamate--tRNA ligase (510 aa).

The 'HIGH' region motif lies at 15 to 25 (PSPTGDPHVGT). The short motif at 256–260 (KISKR) is the 'KMSKS' region element. Residue K259 participates in ATP binding.

This sequence belongs to the class-I aminoacyl-tRNA synthetase family. Glutamate--tRNA ligase type 1 subfamily. In terms of assembly, monomer.

The protein resides in the cytoplasm. The enzyme catalyses tRNA(Glu) + L-glutamate + ATP = L-glutamyl-tRNA(Glu) + AMP + diphosphate. Functionally, catalyzes the attachment of glutamate to tRNA(Glu) in a two-step reaction: glutamate is first activated by ATP to form Glu-AMP and then transferred to the acceptor end of tRNA(Glu). This Fusobacterium nucleatum subsp. nucleatum (strain ATCC 25586 / DSM 15643 / BCRC 10681 / CIP 101130 / JCM 8532 / KCTC 2640 / LMG 13131 / VPI 4355) protein is Glutamate--tRNA ligase.